Reading from the N-terminus, the 375-residue chain is Myb family transcription factor PHL5 (375 aa).

Residues 159-171 (TSSQHQPKQSHPR) are compositionally biased toward polar residues. Residues 159 to 178 (TSSQHQPKQSHPRFSSPPSF) are disordered. The HTH myb-type domain occupies 189-249 (CVNKTRIRWT…HLQKYRIAKY (61 aa)). Positions 220–245 (PKAILKRMDSDGLTIFHVKSHLQKYR) form a DNA-binding region, H-T-H motif. Residues 279-299 (KEALQLQLDVQRHLHEQLEIQ) are a coiled coil. Positions 292–297 (LHEQLE) match the LHEQLE motif.

Belongs to the MYB-CC family.

It is found in the nucleus. The sequence is that of Myb family transcription factor PHL5 from Arabidopsis thaliana (Mouse-ear cress).